The following is a 65-amino-acid chain: Large ribosomal subunit protein bL35 (65 aa).

Residues 23 to 44 (KRMKAGKQHILTKKSQKTKRNL) are disordered.

This sequence belongs to the bacterial ribosomal protein bL35 family.

This chain is Large ribosomal subunit protein bL35, found in Lachnoclostridium phytofermentans (strain ATCC 700394 / DSM 18823 / ISDg) (Clostridium phytofermentans).